The chain runs to 277 residues: 3-methyl-2-oxobutanoate hydroxymethyltransferase (277 aa).

Residues Asp43 and Asp82 each contribute to the Mg(2+) site. 3-methyl-2-oxobutanoate-binding positions include 43 to 44 (DS), Asp82, and Lys112. Residue Glu114 coordinates Mg(2+). Residue Glu181 is the Proton acceptor of the active site.

The protein belongs to the PanB family. In terms of assembly, homodecamer; pentamer of dimers. It depends on Mg(2+) as a cofactor.

Its subcellular location is the cytoplasm. It catalyses the reaction 3-methyl-2-oxobutanoate + (6R)-5,10-methylene-5,6,7,8-tetrahydrofolate + H2O = 2-dehydropantoate + (6S)-5,6,7,8-tetrahydrofolate. It participates in cofactor biosynthesis; (R)-pantothenate biosynthesis; (R)-pantoate from 3-methyl-2-oxobutanoate: step 1/2. Catalyzes the reversible reaction in which hydroxymethyl group from 5,10-methylenetetrahydrofolate is transferred onto alpha-ketoisovalerate to form ketopantoate. The polypeptide is 3-methyl-2-oxobutanoate hydroxymethyltransferase (Bacillus velezensis (strain DSM 23117 / BGSC 10A6 / LMG 26770 / FZB42) (Bacillus amyloliquefaciens subsp. plantarum)).